The primary structure comprises 266 residues: Small ribosomal subunit protein eS1 (266 aa).

Residues Gly-236 to Val-266 are disordered. The segment covering Thr-244–Gly-257 has biased composition (basic and acidic residues).

This sequence belongs to the eukaryotic ribosomal protein eS1 family. In terms of assembly, component of the small ribosomal subunit. Mature ribosomes consist of a small (40S) and a large (60S) subunit. The 40S subunit contains about 33 different proteins and 1 molecule of RNA (18S). The 60S subunit contains about 49 different proteins and 3 molecules of RNA (28S, 5.8S and 5S). Part of the small subunit (SSU) processome, composed of more than 70 proteins and the RNA chaperone small nucleolar RNA (snoRNA) U3.

The protein resides in the cytoplasm. The protein localises to the nucleus. Its subcellular location is the nucleolus. Functionally, component of the small ribosomal subunit. The ribosome is a large ribonucleoprotein complex responsible for the synthesis of proteins in the cell. Part of the small subunit (SSU) processome, first precursor of the small eukaryotic ribosomal subunit. During the assembly of the SSU processome in the nucleolus, many ribosome biogenesis factors, an RNA chaperone and ribosomal proteins associate with the nascent pre-rRNA and work in concert to generate RNA folding, modifications, rearrangements and cleavage as well as targeted degradation of pre-ribosomal RNA by the RNA exosome. May play a role during erythropoiesis. This chain is Small ribosomal subunit protein eS1 (rps3a), found in Tetraodon nigroviridis (Spotted green pufferfish).